The chain runs to 374 residues: Probable ethanolamine kinase (374 aa).

Positions 93 and 252 each coordinate ATP.

The protein belongs to the choline/ethanolamine kinase family.

The enzyme catalyses ethanolamine + ATP = phosphoethanolamine + ADP + H(+). Its pathway is phospholipid metabolism; phosphatidylethanolamine biosynthesis; phosphatidylethanolamine from ethanolamine: step 1/3. Functionally, involved in phospholipid biosynthesis. Catalyzes the first step in phosphatidylethanolamine biosynthesis. The polypeptide is Probable ethanolamine kinase (EMB1187) (Arabidopsis thaliana (Mouse-ear cress)).